The chain runs to 198 residues: Large ribosomal subunit protein eL19 (198 aa).

Disordered regions lie at residues 66–85 (YEEA…RGTA) and 150–177 (KRAK…EERQ). The span at 71 to 83 (RKGRHTGYGKRRG) shows a compositional bias: basic residues. Residues 160-177 (QARRDKNKESRKRREERQ) are compositionally biased toward basic and acidic residues.

The protein belongs to the eukaryotic ribosomal protein eL19 family.

The polypeptide is Large ribosomal subunit protein eL19 (rpl-19) (Caenorhabditis elegans).